The sequence spans 667 residues: Transmembrane 9 superfamily member 1 (667 aa).

The first 22 residues, methionine 1–alanine 22, serve as a signal peptide directing secretion. The Lumenal portion of the chain corresponds to phenylalanine 23–serine 302. N-linked (GlcNAc...) asparagine glycans are attached at residues asparagine 61 and asparagine 282. The helical transmembrane segment at isoleucine 303 to isoleucine 323 threads the bilayer. Residues histidine 324–serine 370 are Cytoplasmic-facing. Residues isoleucine 371 to alanine 391 form a helical membrane-spanning segment. At leucine 392–threonine 405 the chain is on the lumenal side. The chain crosses the membrane as a helical span at residues valine 406–tyrosine 426. Residues lysine 427–proline 442 are Cytoplasmic-facing. The chain crosses the membrane as a helical span at residues leucine 443–valine 463. Over histidine 464 to leucine 474 the chain is Lumenal. The chain crosses the membrane as a helical span at residues phenylalanine 475 to isoleucine 495. The Cytoplasmic segment spans residues alanine 496 to proline 527. Residues alanine 528 to tyrosine 548 traverse the membrane as a helical segment. At threonine 549–phenylalanine 560 the chain is on the lumenal side. A helical membrane pass occupies residues glycine 561–isoleucine 581. The Cytoplasmic portion of the chain corresponds to threonine 582–arginine 596. The chain crosses the membrane as a helical span at residues glycine 597 to threonine 617. The Lumenal portion of the chain corresponds to lysine 618 to serine 635. A helical membrane pass occupies residues valine 636–phenylalanine 656. The Cytoplasmic segment spans residues valine 657–aspartate 667.

The protein belongs to the nonaspanin (TM9SF) (TC 9.A.2) family.

The protein localises to the endosome membrane. The protein resides in the vacuole membrane. Its function is as follows. With TMN2 and TMN3, plays a critical role in the late stages of a nutrient-controlled pathway notably regulating FLO11 gene expression. Acts downstream of RAS2 and TOR. Essential for cell adhesion and filamentous growth. May play a role as effector of cellular copper homeostasis. This chain is Transmembrane 9 superfamily member 1 (EMP70), found in Saccharomyces cerevisiae (strain ATCC 204508 / S288c) (Baker's yeast).